The sequence spans 79 residues: Major outer membrane lipoprotein Lpp 2 (79 aa).

Residues 1–21 form the signal peptide; it reads MNRTNKLILGAVVLGSTLLAG. Residue Cys-22 is the site of N-palmitoyl cysteine attachment. A lipid anchor (S-diacylglycerol cysteine) is attached at Cys-22. 2 consecutive repeats follow at residues 25–35 and 39–49; these read NAKIDQLSSDV and SAKVDQLSNDV. Residues 28-69 are a coiled coil; it reads IDQLSSDVQTLSAKVDQLSNDVNAMRSDVQAAKDDAARANQR. Lys-79 carries the post-translational modification N6-murein peptidoglycan lysine.

This sequence belongs to the Lpp family. As to quaternary structure, homotrimer.

The protein resides in the cell outer membrane. Its subcellular location is the secreted. It localises to the cell wall. In terms of biological role, a highly abundant outer membrane lipoprotein that controls the distance between the inner and outer membranes. The only protein known to be covalently linked to the peptidoglycan network (PGN). Also non-covalently binds the PGN. The link between the cell outer membrane and PGN contributes to maintenance of the structural and functional integrity of the cell envelope, and maintains the correct distance between the PGN and the outer membrane. The chain is Major outer membrane lipoprotein Lpp 2 from Salmonella typhi.